Reading from the N-terminus, the 127-residue chain is DNA-directed RNA polymerase subunit omega (127 aa).

Belongs to the RNA polymerase subunit omega family. In terms of assembly, the RNAP catalytic core consists of 2 alpha, 1 beta, 1 beta' and 1 omega subunit. When a sigma factor is associated with the core the holoenzyme is formed, which can initiate transcription.

It carries out the reaction RNA(n) + a ribonucleoside 5'-triphosphate = RNA(n+1) + diphosphate. Promotes RNA polymerase assembly. Latches the N- and C-terminal regions of the beta' subunit thereby facilitating its interaction with the beta and alpha subunits. The sequence is that of DNA-directed RNA polymerase subunit omega from Rickettsia rickettsii (strain Iowa).